Consider the following 77-residue polypeptide: MKAFIAILSIAIVLLLIVSIKETSAKDCKQECVKRYTKGDLTNFLKAEYEPKNRGGICYCEFTCHVKFYIYLKHEMD.

The first 25 residues, 1 to 25 (MKAFIAILSIAIVLLLIVSIKETSA), serve as a signal peptide directing secretion. Residues 26 to 46 (KDCKQECVKRYTKGDLTNFLK) constitute a propeptide that is removed on maturation.

It belongs to the scolopendra neurotoxin 3 family. Contains 2 disulfide bonds. As to expression, expressed by the venom gland.

The protein resides in the secreted. This is Putative neurotoxin 1 from Scolopendra mutilans (Chinese red-headed centipede).